Reading from the N-terminus, the 98-residue chain is UPF0251 protein SO_0727 (98 aa).

This sequence belongs to the UPF0251 family.

This is UPF0251 protein SO_0727 from Shewanella oneidensis (strain ATCC 700550 / JCM 31522 / CIP 106686 / LMG 19005 / NCIMB 14063 / MR-1).